A 467-amino-acid polypeptide reads, in one-letter code: Ankyrin repeat and SOCS box protein 10 (467 aa).

ANK repeat units follow at residues 115–144 (ELTT…KPDS), 147–176 (GGRT…DPNT), 180–209 (DGKR…QVDG), 214–243 (EEET…CPDV), 247–289 (EGWT…DADA), 293–322 (DKQR…NANA), and 326–361 (GGHT…AVRV). Residues 412-467 (YSSLFALVRQPRSLQHLCRCALRSHLEGCLPHALPRLPLPPRMLRFLQLDFEDLLY) enclose the SOCS box domain.

This sequence belongs to the ankyrin SOCS box (ASB) family.

It localises to the nucleus. The protein localises to the cytoplasm. Its pathway is protein modification; protein ubiquitination. Functionally, may be a substrate-recognition component of a SCF-like ECS (Elongin-Cullin-SOCS-box protein) E3 ubiquitin-protein ligase complex which mediates the ubiquitination and subsequent proteasomal degradation of target proteins. This is Ankyrin repeat and SOCS box protein 10 (Asb10) from Mus musculus (Mouse).